Here is a 476-residue protein sequence, read N- to C-terminus: UDP-N-acetylmuramate--L-alanine ligase (476 aa).

An ATP-binding site is contributed by 107–113; the sequence is GTHGKTT.

Belongs to the MurCDEF family.

It is found in the cytoplasm. The catalysed reaction is UDP-N-acetyl-alpha-D-muramate + L-alanine + ATP = UDP-N-acetyl-alpha-D-muramoyl-L-alanine + ADP + phosphate + H(+). It functions in the pathway cell wall biogenesis; peptidoglycan biosynthesis. Functionally, cell wall formation. The sequence is that of UDP-N-acetylmuramate--L-alanine ligase from Roseiflexus castenholzii (strain DSM 13941 / HLO8).